Here is a 222-residue protein sequence, read N- to C-terminus: Endonuclease V (222 aa).

Mg(2+) is bound by residues aspartate 43 and aspartate 109.

Belongs to the endonuclease V family. Requires Mg(2+) as cofactor.

Its subcellular location is the cytoplasm. It carries out the reaction Endonucleolytic cleavage at apurinic or apyrimidinic sites to products with a 5'-phosphate.. In terms of biological role, DNA repair enzyme involved in the repair of deaminated bases. Selectively cleaves double-stranded DNA at the second phosphodiester bond 3' to a deoxyinosine leaving behind the intact lesion on the nicked DNA. In Roseiflexus sp. (strain RS-1), this protein is Endonuclease V.